Reading from the N-terminus, the 414-residue chain is Multifunctional CCA protein (414 aa).

ATP is bound by residues G8 and R11. Residues G8 and R11 each coordinate CTP. D21 and D23 together coordinate Mg(2+). ATP-binding residues include R91, R137, and R140. Residues R91, R137, and R140 each coordinate CTP. Positions T226–F327 constitute an HD domain.

Belongs to the tRNA nucleotidyltransferase/poly(A) polymerase family. Bacterial CCA-adding enzyme type 1 subfamily. Monomer. Can also form homodimers and oligomers. Mg(2+) serves as cofactor. Requires Ni(2+) as cofactor.

The catalysed reaction is a tRNA precursor + 2 CTP + ATP = a tRNA with a 3' CCA end + 3 diphosphate. It catalyses the reaction a tRNA with a 3' CCA end + 2 CTP + ATP = a tRNA with a 3' CCACCA end + 3 diphosphate. Functionally, catalyzes the addition and repair of the essential 3'-terminal CCA sequence in tRNAs without using a nucleic acid template. Adds these three nucleotides in the order of C, C, and A to the tRNA nucleotide-73, using CTP and ATP as substrates and producing inorganic pyrophosphate. tRNA 3'-terminal CCA addition is required both for tRNA processing and repair. Also involved in tRNA surveillance by mediating tandem CCA addition to generate a CCACCA at the 3' terminus of unstable tRNAs. While stable tRNAs receive only 3'-terminal CCA, unstable tRNAs are marked with CCACCA and rapidly degraded. This is Multifunctional CCA protein from Herminiimonas arsenicoxydans.